Here is a 283-residue protein sequence, read N- to C-terminus: MAARSIALGTIRFANDAPFVLIGGINVLESREFALEVAGHYKTVCTKLGIPLVFKASFDKANRSSIHSYRGPGLREGLEILQVVKDTHGIPVITDVHSPEEATPAAEVCDIIQLPAFLARQTDLIEAMAKTGAVINIKKPQFLSPSQMSNVVEKFRECGNENLLICERGSNFGYDNLVVDMLAFGVMKHCCNDLPLIFDVTHALQCRDPSGAASGGRRSQVVDLARSGMAVGLAGLFLESHPDPDKARCDGPSALPLALLEPFLQQVKAIDEVVKALPTLSVS.

The protein belongs to the KdsA family.

It localises to the cytoplasm. The enzyme catalyses D-arabinose 5-phosphate + phosphoenolpyruvate + H2O = 3-deoxy-alpha-D-manno-2-octulosonate-8-phosphate + phosphate. The protein operates within carbohydrate biosynthesis; 3-deoxy-D-manno-octulosonate biosynthesis; 3-deoxy-D-manno-octulosonate from D-ribulose 5-phosphate: step 2/3. It functions in the pathway bacterial outer membrane biogenesis; lipopolysaccharide biosynthesis. The protein is 2-dehydro-3-deoxyphosphooctonate aldolase of Prochlorococcus marinus (strain MIT 9313).